We begin with the raw amino-acid sequence, 283 residues long: Polyamine aminopropyltransferase (283 aa).

One can recognise a PABS domain in the interval 5 to 238 (QTWIDEYHKG…GIWSWTFASS (234 aa)). S-methyl-5'-thioadenosine is bound at residue Gln-32. Residues His-63 and Asp-87 each contribute to the spermidine site. Residues Glu-107 and 139–140 (DG) each bind S-methyl-5'-thioadenosine. Asp-158 (proton acceptor) is an active-site residue. 158–161 (DCSD) provides a ligand contact to spermidine.

The protein belongs to the spermidine/spermine synthase family. Homodimer or homotetramer.

It is found in the cytoplasm. The enzyme catalyses S-adenosyl 3-(methylsulfanyl)propylamine + putrescine = S-methyl-5'-thioadenosine + spermidine + H(+). The protein operates within amine and polyamine biosynthesis; spermidine biosynthesis; spermidine from putrescine: step 1/1. Catalyzes the irreversible transfer of a propylamine group from the amino donor S-adenosylmethioninamine (decarboxy-AdoMet) to putrescine (1,4-diaminobutane) to yield spermidine. The polypeptide is Polyamine aminopropyltransferase (Prochlorococcus marinus (strain MIT 9301)).